The chain runs to 179 residues: Beta-defensin 22 (179 aa).

A signal peptide spans 1–20; the sequence is MKSLLSTLVIIMFLAHLVTG. Intrachain disulfides connect Cys-27-Cys-58, Cys-34-Cys-52, and Cys-38-Cys-59. Over residues 105 to 150 the composition is skewed to low complexity; the sequence is GTPTKTSAPAKTSAPAKTSTTTKASNAAKASTTTKASNAAKASAAT. The tract at residues 105-152 is disordered; the sequence is GTPTKTSAPAKTSAPAKTSTTTKASNAAKASTTTKASNAAKASAATMA.

Belongs to the beta-defensin family. In terms of processing, O-glycosylated; glycans contain alpha(2,3)-linked sialic acids. Specifically expressed in corpus epididymis and cauda epididymis with expression in corpus being highest (at protein level). Not detected in other tissues tested, including testis, prostate, seminal vesicle and vas deferens (at protein level).

The protein localises to the cytoplasmic vesicle. It localises to the secretory vesicle. It is found in the acrosome. Its subcellular location is the secreted. The protein resides in the extracellular space. Its function is as follows. Probable component of sperm glycocalyx. Likely protects and facilitates transport of sperm in the female reproductive tract. Probably released from the sperm surface during capacitation. This chain is Beta-defensin 22, found in Mus musculus (Mouse).